The chain runs to 416 residues: Enolase (416 aa).

A (2R)-2-phosphoglycerate-binding site is contributed by Gln-162. The active-site Proton donor is the Glu-204. Mg(2+) is bound by residues Asp-241, Glu-282, and Asp-309. Residues Lys-334, Arg-363, Ser-364, and Lys-385 each contribute to the (2R)-2-phosphoglycerate site. Lys-334 (proton acceptor) is an active-site residue.

This sequence belongs to the enolase family. The cofactor is Mg(2+).

The protein localises to the cytoplasm. Its subcellular location is the secreted. The protein resides in the cell surface. The catalysed reaction is (2R)-2-phosphoglycerate = phosphoenolpyruvate + H2O. The protein operates within carbohydrate degradation; glycolysis; pyruvate from D-glyceraldehyde 3-phosphate: step 4/5. Its function is as follows. Catalyzes the reversible conversion of 2-phosphoglycerate (2-PG) into phosphoenolpyruvate (PEP). It is essential for the degradation of carbohydrates via glycolysis. This Campylobacter concisus (strain 13826) protein is Enolase.